Here is a 435-residue protein sequence, read N- to C-terminus: MWRIWRCRLSFLFATGCLLGALTAGLGSQMSDSVGRNVQAPAGVADASQEAGDVVEERTERTEEQVFAPGPPRRHSSESLFPRNASVTARRRRNRRIAPIATAVGVAVILAALYVLRRRRAQPPQEPEPPTRLRTPRPRAPSEQQQPSESEPPAEVPMTPDPLTLRFTCLGDRNVIFFGPSGRQDGFTPLYDPSPSKRVATVDAGTYGLFIGGVGMNGEFADTIIEEARRNRIPLTATELSAESQEIQERLLHDAERQPGTLVEIDSGRFSRVFARSFAYVAIVPNTVWDESETGKNVGATFLHILKPEVTPHGNEMNDVMLYTVAPFGNASDSAYNMAYKATMLGIVGAVSEYNKTPWGEVKPVEAIRLPLLGAGHFRGRRGLHSIGRANAVAVEAAITRFDPRVELQFMYEPSDTALRGLMESERKYKFPQGD.

An N-terminal signal peptide occupies residues 1–20 (MWRIWRCRLSFLFATGCLLG). Over 21-95 (ALTAGLGSQM…SVTARRRRNR (75 aa)) the chain is Vacuolar. Positions 43–88 (GVADASQEAGDVVEERTERTEEQVFAPGPPRRHSSESLFPRNASVT) are disordered. A compositionally biased stretch (basic and acidic residues) spans 55 to 64 (VEERTERTEE). Residues 96-116 (RIAPIATAVGVAVILAALYVL) form a helical membrane-spanning segment. The Cytoplasmic segment spans residues 117–435 (RRRRAQPPQE…ERKYKFPQGD (319 aa)). The disordered stretch occupies residues 120-162 (RAQPPQEPEPPTRLRTPRPRAPSEQQQPSESEPPAEVPMTPDP). A compositionally biased stretch (low complexity) spans 141–153 (PSEQQQPSESEPP).

As to quaternary structure, interacts with host SAMM50.

It localises to the parasitophorous vacuole membrane. Its function is as follows. During host cell infection by tachyzoites, does not play a role in tethering the parasitophorous vacuole to the host mitochondria, probably because it does not bind host mitochondrial import protein TOMM70. This chain is Mitochondrial association factor 1 form a1, found in Toxoplasma gondii.